A 587-amino-acid polypeptide reads, in one-letter code: Putative gustatory receptor 59b (587 aa).

The Cytoplasmic segment spans residues 1–4 (MPSY). Residues 5–25 (MAFTPYIMFSTNYAAIAYILI) form a helical membrane-spanning segment. Topologically, residues 26–62 (SRCYRDSMLLDLQRITLEVNREMLRTGKKMNSLIRRM) are extracellular. Residues 63–83 (FFLKTFTLTYSCLSYILAVLV) form a helical membrane-spanning segment. The Cytoplasmic segment spans residues 84–97 (YQWRAQNWSNLFNG). A helical membrane pass occupies residues 98 to 118 (LLVNISLTILVVTTFFYFVSL). Over 119 to 277 (MHVARGFDFV…CGLYPVNKAK (159 aa)) the chain is Extracellular. A glycan (N-linked (GlcNAc...) asparagine) is linked at Asn-159. The chain crosses the membrane as a helical span at residues 278–298 (WLEMVASIVVHSIMLFQFHLV). Topologically, residues 299–309 (MRGGYTTLFSR) are cytoplasmic. The chain crosses the membrane as a helical span at residues 310 to 330 (TYALLANIITLTMLPIVMWQV). Residues 331-403 (RSVFLAKRHY…GIDGVRRSLR (73 aa)) are Extracellular-facing. The chain crosses the membrane as a helical span at residues 404-424 (ILLFVKFFTLSWLCITDIIFL). The Cytoplasmic portion of the chain corresponds to 425 to 518 (FYSSDAVIWV…IYAPQMLATR (94 aa)). Residues 519–539 (FDHFVIGVIQAYWGAVFTFDL) form a helical membrane-spanning segment. Over 540–587 (STSFLWVVYGSVQYHVRSLDYYLIDYMCDVAVEYHDSARHSWSEKECY) the chain is Extracellular.

This sequence belongs to the insect chemoreceptor superfamily. Gustatory receptor (GR) family. Gr22e subfamily.

Its subcellular location is the cell membrane. In terms of biological role, probable gustatory receptor which mediates acceptance or avoidance behavior, depending on its substrates. This chain is Putative gustatory receptor 59b, found in Drosophila erecta (Fruit fly).